Consider the following 260-residue polypeptide: Ubiquinone/menaquinone biosynthesis C-methyltransferase UbiE (260 aa).

Residues T83, D104, and N132 to A133 contribute to the S-adenosyl-L-methionine site.

The protein belongs to the class I-like SAM-binding methyltransferase superfamily. MenG/UbiE family.

The enzyme catalyses a 2-demethylmenaquinol + S-adenosyl-L-methionine = a menaquinol + S-adenosyl-L-homocysteine + H(+). It carries out the reaction a 2-methoxy-6-(all-trans-polyprenyl)benzene-1,4-diol + S-adenosyl-L-methionine = a 5-methoxy-2-methyl-3-(all-trans-polyprenyl)benzene-1,4-diol + S-adenosyl-L-homocysteine + H(+). It participates in quinol/quinone metabolism; menaquinone biosynthesis; menaquinol from 1,4-dihydroxy-2-naphthoate: step 2/2. It functions in the pathway cofactor biosynthesis; ubiquinone biosynthesis. Its function is as follows. Methyltransferase required for the conversion of demethylmenaquinol (DMKH2) to menaquinol (MKH2) and the conversion of 2-polyprenyl-6-methoxy-1,4-benzoquinol (DDMQH2) to 2-polyprenyl-3-methyl-6-methoxy-1,4-benzoquinol (DMQH2). In Bartonella tribocorum (strain CIP 105476 / IBS 506), this protein is Ubiquinone/menaquinone biosynthesis C-methyltransferase UbiE.